The primary structure comprises 123 residues: Small ribosomal subunit protein uS12 (123 aa).

3-methylthioaspartic acid is present on aspartate 89.

The protein belongs to the universal ribosomal protein uS12 family. As to quaternary structure, part of the 30S ribosomal subunit. Contacts proteins S8 and S17. May interact with IF1 in the 30S initiation complex.

With S4 and S5 plays an important role in translational accuracy. In terms of biological role, interacts with and stabilizes bases of the 16S rRNA that are involved in tRNA selection in the A site and with the mRNA backbone. Located at the interface of the 30S and 50S subunits, it traverses the body of the 30S subunit contacting proteins on the other side and probably holding the rRNA structure together. The combined cluster of proteins S8, S12 and S17 appears to hold together the shoulder and platform of the 30S subunit. The chain is Small ribosomal subunit protein uS12 from Rhodopseudomonas palustris (strain BisA53).